We begin with the raw amino-acid sequence, 642 residues long: Threonine--tRNA ligase (642 aa).

One can recognise a TGS domain in the interval 1-61 (MPVITLPDGS…VDDASVAIIT (61 aa)). Residues 243-534 (DHRKIGKQLD…LTEEYAGFFP (292 aa)) form a catalytic region. The Zn(2+) site is built by cysteine 334, histidine 385, and histidine 511.

The protein belongs to the class-II aminoacyl-tRNA synthetase family. Homodimer. Zn(2+) serves as cofactor.

The protein resides in the cytoplasm. It carries out the reaction tRNA(Thr) + L-threonine + ATP = L-threonyl-tRNA(Thr) + AMP + diphosphate + H(+). Its function is as follows. Catalyzes the attachment of threonine to tRNA(Thr) in a two-step reaction: L-threonine is first activated by ATP to form Thr-AMP and then transferred to the acceptor end of tRNA(Thr). Also edits incorrectly charged L-seryl-tRNA(Thr). The chain is Threonine--tRNA ligase from Erwinia tasmaniensis (strain DSM 17950 / CFBP 7177 / CIP 109463 / NCPPB 4357 / Et1/99).